Here is an 80-residue protein sequence, read N- to C-terminus: FXYD domain-containing ion transport regulator 7 (80 aa).

Residues 1–22 (MATPTQSPTNVPEETDPFFYDY) lie on the Extracellular side of the membrane. Residues threonine 3, threonine 5, and threonine 9 are each glycosylated (O-linked (GlcNAc) threonine). The chain crosses the membrane as a helical span at residues 23–45 (ATVQTVGMTLATIMFVLGIIIII). The Cytoplasmic segment spans residues 46–80 (SKKVKCRKADSRSESPTCKSCKSELPSSAPGGGGV). Positions 56 to 80 (SRSESPTCKSCKSELPSSAPGGGGV) are disordered. Serine 73 carries the phosphoserine modification.

Belongs to the FXYD family. As to quaternary structure, regulatory subunit of the sodium/potassium-transporting ATPase which is composed of a catalytic alpha subunit, a non-catalytic beta subunit and an additional regulatory subunit. The regulatory subunit, a member of the FXYD protein family, modulates the enzymatic activity in a tissue- and isoform-specific way by changing affinities of the Na+/K+-ATPase toward Na(+), K(+) or ATP. Post-translationally, O-glycosylated; required for stabilization and translocation to the plasma membrane. Expressed specifically in brain. Expressed in both neurons and glia.

Its subcellular location is the cell membrane. Associates with and regulates the activity of the sodium/potassium-transporting ATPase (NKA) which catalyzes the hydrolysis of ATP coupled with the exchange of Na(+) and K(+) ions across the plasma membrane. Reduces the apparent affinity for external K(+), an effect that depends on the presence of external Na(+) and voltage. Increases the apparent affinity for intracellular Na(+). This chain is FXYD domain-containing ion transport regulator 7 (Fxyd7), found in Rattus norvegicus (Rat).